The sequence spans 159 residues: Major allergen Pyr c 1 (159 aa).

Belongs to the BetVI family.

This Pyrus communis (Pear) protein is Major allergen Pyr c 1 (PYRC1).